The chain runs to 389 residues: 1-deoxy-D-xylulose 5-phosphate reductoisomerase (389 aa).

NADPH is bound by residues Ser-11, Gly-12, Ser-13, Val-14, Asn-39, and Asn-122. Lys-123 contributes to the 1-deoxy-D-xylulose 5-phosphate binding site. Glu-124 contacts NADPH. Asp-148 is a Mn(2+) binding site. Positions 149, 150, 174, and 197 each coordinate 1-deoxy-D-xylulose 5-phosphate. Mn(2+) is bound at residue Glu-150. Gly-203 serves as a coordination point for NADPH. 1-deoxy-D-xylulose 5-phosphate-binding residues include Ser-210, Asn-215, Lys-216, and Glu-219. Mn(2+) is bound at residue Glu-219.

It belongs to the DXR family. Mg(2+) is required as a cofactor. Mn(2+) serves as cofactor.

It carries out the reaction 2-C-methyl-D-erythritol 4-phosphate + NADP(+) = 1-deoxy-D-xylulose 5-phosphate + NADPH + H(+). It functions in the pathway isoprenoid biosynthesis; isopentenyl diphosphate biosynthesis via DXP pathway; isopentenyl diphosphate from 1-deoxy-D-xylulose 5-phosphate: step 1/6. Catalyzes the NADPH-dependent rearrangement and reduction of 1-deoxy-D-xylulose-5-phosphate (DXP) to 2-C-methyl-D-erythritol 4-phosphate (MEP). This Leptospira borgpetersenii serovar Hardjo-bovis (strain JB197) protein is 1-deoxy-D-xylulose 5-phosphate reductoisomerase.